The primary structure comprises 304 residues: UDP-3-O-acyl-N-acetylglucosamine deacetylase (304 aa).

Zn(2+) contacts are provided by His78, His237, and Asp241. Residue His264 is the Proton donor of the active site.

It belongs to the LpxC family. Zn(2+) is required as a cofactor.

It carries out the reaction a UDP-3-O-[(3R)-3-hydroxyacyl]-N-acetyl-alpha-D-glucosamine + H2O = a UDP-3-O-[(3R)-3-hydroxyacyl]-alpha-D-glucosamine + acetate. It participates in glycolipid biosynthesis; lipid IV(A) biosynthesis; lipid IV(A) from (3R)-3-hydroxytetradecanoyl-[acyl-carrier-protein] and UDP-N-acetyl-alpha-D-glucosamine: step 2/6. In terms of biological role, catalyzes the hydrolysis of UDP-3-O-myristoyl-N-acetylglucosamine to form UDP-3-O-myristoylglucosamine and acetate, the committed step in lipid A biosynthesis. This chain is UDP-3-O-acyl-N-acetylglucosamine deacetylase, found in Alcanivorax borkumensis (strain ATCC 700651 / DSM 11573 / NCIMB 13689 / SK2).